An 84-amino-acid polypeptide reads, in one-letter code: Small ribosomal subunit protein bS16 (84 aa).

It belongs to the bacterial ribosomal protein bS16 family.

This chain is Small ribosomal subunit protein bS16, found in Burkholderia multivorans (strain ATCC 17616 / 249).